The following is a 257-amino-acid chain: Pyridoxal phosphate homeostasis protein (257 aa).

Ser-2 is subject to N-acetylserine. An N6-(pyridoxal phosphate)lysine modification is found at Lys-49.

It belongs to the pyridoxal phosphate-binding protein YggS/PROSC family.

Its subcellular location is the cytoplasm. The protein localises to the nucleus. Functionally, pyridoxal 5'-phosphate (PLP)-binding protein, which may be involved in intracellular homeostatic regulation of pyridoxal 5'-phosphate (PLP), the active form of vitamin B6. In Saccharomyces cerevisiae (strain ATCC 204508 / S288c) (Baker's yeast), this protein is Pyridoxal phosphate homeostasis protein.